Reading from the N-terminus, the 670-residue chain is Probable E3 ubiquitin ligase complex SCF subunit sconB (670 aa).

The tract at residues 1–38 (MSSPPPFTSIFGGPAESAEEIDADADNSQLKPHNRSNV) is disordered. Residues 27–38 (NSQLKPHNRSNV) show a composition bias toward polar residues. The 47-residue stretch at 163–209 (IDFIAALPPEISFKILCYLDTTSLCKAAQVSRRWRALADDDVVWHRM) folds into the F-box domain. The disordered stretch occupies residues 249–287 (VNGTSPKATPALPEDASPVADSSGTGKRKPEPSEEETAV). WD repeat units lie at residues 339–376 (GHTNGVMCLQFEDNILATGSYDATIKIWDTDTGQEIRT), 379–418 (GHESGIRCLQFDDTKLISGSMDGSVKVWNWRTGDCISTYT), 420–456 (HRGGVIGLHFDATILASASVDKTVKIWNFEDKSTCLL), 458–499 (GHTD…RTFH), 553–596 (ISQS…CLRT), 599–636 (GHLEGVWALAADTLRIVSGAEDRMIKIWDPRTGKCERT), and 639–670 (GHSGPVTCIGLGDSRFATGSEDCEVRMYSFQS).

This sequence belongs to the WD repeat MET30/SCONB/SCON-2 family. As to quaternary structure, component of the SCF(sconB) E3 ubiquitin ligase complex.

Its pathway is protein modification; protein ubiquitination. Component of the SCF(sconB) E3 ubiquitin ligase complex involved in the regulation of sulfur metabolite repression, probably by mediating the inactivation or degradation of the metR transcription factor. In Aspergillus niger (strain ATCC MYA-4892 / CBS 513.88 / FGSC A1513), this protein is Probable E3 ubiquitin ligase complex SCF subunit sconB (sconB).